A 271-amino-acid chain; its full sequence is Formamidopyrimidine-DNA glycosylase (271 aa).

Pro-2 acts as the Schiff-base intermediate with DNA in catalysis. The active-site Proton donor is Glu-3. The active-site Proton donor; for beta-elimination activity is the Lys-57. DNA contacts are provided by His-90, Arg-109, and Lys-151. The FPG-type zinc-finger motif lies at 236–270 (HVYGRGGETCTQCGNLLSEIRLGQRTTVFCGICQT). Arg-260 (proton donor; for delta-elimination activity) is an active-site residue.

This sequence belongs to the FPG family. In terms of assembly, monomer. Requires Zn(2+) as cofactor.

The enzyme catalyses Hydrolysis of DNA containing ring-opened 7-methylguanine residues, releasing 2,6-diamino-4-hydroxy-5-(N-methyl)formamidopyrimidine.. The catalysed reaction is 2'-deoxyribonucleotide-(2'-deoxyribose 5'-phosphate)-2'-deoxyribonucleotide-DNA = a 3'-end 2'-deoxyribonucleotide-(2,3-dehydro-2,3-deoxyribose 5'-phosphate)-DNA + a 5'-end 5'-phospho-2'-deoxyribonucleoside-DNA + H(+). Its function is as follows. Involved in base excision repair of DNA damaged by oxidation or by mutagenic agents. Acts as a DNA glycosylase that recognizes and removes damaged bases. Has a preference for oxidized purines, such as 7,8-dihydro-8-oxoguanine (8-oxoG). Has AP (apurinic/apyrimidinic) lyase activity and introduces nicks in the DNA strand. Cleaves the DNA backbone by beta-delta elimination to generate a single-strand break at the site of the removed base with both 3'- and 5'-phosphates. The polypeptide is Formamidopyrimidine-DNA glycosylase (Shewanella sp. (strain MR-7)).